The following is a 496-amino-acid chain: Probable CtpA-like serine protease (496 aa).

Residues 1 to 16 show a composition bias toward basic and acidic residues; that stretch reads MDDKQHTSSSDDERAE. The tract at residues 1–27 is disordered; the sequence is MDDKQHTSSSDDERAEIATSNQDQETN. Positions 18–27 are enriched in polar residues; sequence ATSNQDQETN. A helical transmembrane segment spans residues 39 to 59; sequence FISILIGTTLITAVITVVAYI. A PDZ domain is found at 124 to 206; the sequence is TKSFNEGVSG…TEVTLTVQRG (83 aa). Residues S329, D340, and K354 each act as charge relay system in the active site.

Belongs to the peptidase S41A family.

The protein resides in the cell membrane. The protein is Probable CtpA-like serine protease of Staphylococcus aureus (strain Mu50 / ATCC 700699).